Reading from the N-terminus, the 303-residue chain is Phosphatidylglycerol--prolipoprotein diacylglyceryl transferase (303 aa).

A run of 3 helical transmembrane segments spans residues 18–38, 50–70, and 106–126; these read LGTL…LIGL, INPG…IFGA, and IWNG…SIIL. R154 provides a ligand contact to a 1,2-diacyl-sn-glycero-3-phospho-(1'-sn-glycerol). Helical transmembrane passes span 193-213, 223-243, and 266-286; these read PTFL…IFLF, LPSG…RIWI, and IAQL…WWIY.

It belongs to the Lgt family.

Its subcellular location is the cell inner membrane. The catalysed reaction is L-cysteinyl-[prolipoprotein] + a 1,2-diacyl-sn-glycero-3-phospho-(1'-sn-glycerol) = an S-1,2-diacyl-sn-glyceryl-L-cysteinyl-[prolipoprotein] + sn-glycerol 1-phosphate + H(+). The protein operates within protein modification; lipoprotein biosynthesis (diacylglyceryl transfer). Functionally, catalyzes the transfer of the diacylglyceryl group from phosphatidylglycerol to the sulfhydryl group of the N-terminal cysteine of a prolipoprotein, the first step in the formation of mature lipoproteins. This chain is Phosphatidylglycerol--prolipoprotein diacylglyceryl transferase, found in Prochlorococcus marinus (strain SARG / CCMP1375 / SS120).